The chain runs to 317 residues: 4-hydroxy-3-methylbut-2-enyl diphosphate reductase (317 aa).

[4Fe-4S] cluster is bound at residue cysteine 12. (2E)-4-hydroxy-3-methylbut-2-enyl diphosphate contacts are provided by histidine 41 and histidine 74. Histidine 41 and histidine 74 together coordinate dimethylallyl diphosphate. Isopentenyl diphosphate is bound by residues histidine 41 and histidine 74. Cysteine 97 is a binding site for [4Fe-4S] cluster. Histidine 125 provides a ligand contact to (2E)-4-hydroxy-3-methylbut-2-enyl diphosphate. Histidine 125 contributes to the dimethylallyl diphosphate binding site. Histidine 125 is an isopentenyl diphosphate binding site. The active-site Proton donor is the glutamate 127. Residue threonine 168 participates in (2E)-4-hydroxy-3-methylbut-2-enyl diphosphate binding. Cysteine 198 is a binding site for [4Fe-4S] cluster. Serine 226, serine 227, asparagine 228, and serine 270 together coordinate (2E)-4-hydroxy-3-methylbut-2-enyl diphosphate. Dimethylallyl diphosphate is bound by residues serine 226, serine 227, asparagine 228, and serine 270. Residues serine 226, serine 227, asparagine 228, and serine 270 each contribute to the isopentenyl diphosphate site.

Belongs to the IspH family. In terms of assembly, homodimer. [4Fe-4S] cluster is required as a cofactor.

It catalyses the reaction isopentenyl diphosphate + 2 oxidized [2Fe-2S]-[ferredoxin] + H2O = (2E)-4-hydroxy-3-methylbut-2-enyl diphosphate + 2 reduced [2Fe-2S]-[ferredoxin] + 2 H(+). It carries out the reaction dimethylallyl diphosphate + 2 oxidized [2Fe-2S]-[ferredoxin] + H2O = (2E)-4-hydroxy-3-methylbut-2-enyl diphosphate + 2 reduced [2Fe-2S]-[ferredoxin] + 2 H(+). It participates in isoprenoid biosynthesis; dimethylallyl diphosphate biosynthesis; dimethylallyl diphosphate from (2E)-4-hydroxy-3-methylbutenyl diphosphate: step 1/1. The protein operates within isoprenoid biosynthesis; isopentenyl diphosphate biosynthesis via DXP pathway; isopentenyl diphosphate from 1-deoxy-D-xylulose 5-phosphate: step 6/6. Functionally, catalyzes the conversion of 1-hydroxy-2-methyl-2-(E)-butenyl 4-diphosphate (HMBPP) into a mixture of isopentenyl diphosphate (IPP) and dimethylallyl diphosphate (DMAPP). Acts in the terminal step of the DOXP/MEP pathway for isoprenoid precursor biosynthesis. The sequence is that of 4-hydroxy-3-methylbut-2-enyl diphosphate reductase from Edwardsiella ictaluri (strain 93-146).